The following is a 359-amino-acid chain: Peptide chain release factor 1 (359 aa).

Gln-236 carries the N5-methylglutamine modification. Residues 288 to 307 form a disordered region; sequence QDEQDAERKSTIGTGDRSER. Basic and acidic residues predominate over residues 293–307; that stretch reads AERKSTIGTGDRSER.

Belongs to the prokaryotic/mitochondrial release factor family. In terms of processing, methylated by PrmC. Methylation increases the termination efficiency of RF1.

Its subcellular location is the cytoplasm. Its function is as follows. Peptide chain release factor 1 directs the termination of translation in response to the peptide chain termination codons UAG and UAA. In Streptococcus sanguinis (strain SK36), this protein is Peptide chain release factor 1.